A 367-amino-acid chain; its full sequence is Cobalt-precorrin-5B C(1)-methyltransferase (367 aa).

Belongs to the CbiD family.

It carries out the reaction Co-precorrin-5B + S-adenosyl-L-methionine = Co-precorrin-6A + S-adenosyl-L-homocysteine. It participates in cofactor biosynthesis; adenosylcobalamin biosynthesis; cob(II)yrinate a,c-diamide from sirohydrochlorin (anaerobic route): step 6/10. In terms of biological role, catalyzes the methylation of C-1 in cobalt-precorrin-5B to form cobalt-precorrin-6A. The protein is Cobalt-precorrin-5B C(1)-methyltransferase of Leptospira interrogans serogroup Icterohaemorrhagiae serovar Lai (strain 56601).